The sequence spans 64 residues: Large ribosomal subunit protein bL35 (64 aa).

Positions 1-15 (MPKSKTHSGTAKRFK) are enriched in basic residues. Positions 1–23 (MPKSKTHSGTAKRFKVSGSGKIL) are disordered.

It belongs to the bacterial ribosomal protein bL35 family.

In Rhodococcus jostii (strain RHA1), this protein is Large ribosomal subunit protein bL35.